We begin with the raw amino-acid sequence, 684 residues long: Zinc finger BED domain-containing protein RICESLEEPER 4 (684 aa).

Residues 54–113 (KRKSAIWEHFTLVDVSDGCKRASCIHCNQSLAYSSGSKNSGTSHLTRHIAEWCRVLKDRQ) form a BED-type zinc finger. Cys-77, Cys-80, His-101, and Cys-106 together coordinate Zn(2+). The segment at 595–680 (ELELYLEEAL…EALLCAKDWL (86 aa)) is HATC (Hobo-Ac-Tam3) domain.

In terms of assembly, homodimer.

The protein resides in the nucleus. Functionally, transposase-like protein that is essential for plant growth and development. May regulate global gene expression by recruiting other cellular factors. The chain is Zinc finger BED domain-containing protein RICESLEEPER 4 from Oryza sativa subsp. japonica (Rice).